We begin with the raw amino-acid sequence, 101 residues long: Large ribosomal subunit protein uL23 (101 aa).

It belongs to the universal ribosomal protein uL23 family. As to quaternary structure, part of the 50S ribosomal subunit. Contacts protein L29, and trigger factor when it is bound to the ribosome.

Its function is as follows. One of the early assembly proteins it binds 23S rRNA. One of the proteins that surrounds the polypeptide exit tunnel on the outside of the ribosome. Forms the main docking site for trigger factor binding to the ribosome. This Tolumonas auensis (strain DSM 9187 / NBRC 110442 / TA 4) protein is Large ribosomal subunit protein uL23.